We begin with the raw amino-acid sequence, 369 residues long: Prenyltransferase malB (369 aa).

Residue glutamate 87 participates in substrate binding. Dimethylallyl diphosphate-binding residues include arginine 100 and tyrosine 189. Position 191 (tyrosine 191) interacts with substrate.

The protein belongs to the tryptophan dimethylallyltransferase family.

Its function is as follows. Prenyltransferase; part of the gene cluster that mediates the biosynthesis of malbrancheamide, a dichlorinated fungal indole alkaloid that belongs to a family of natural products containing a characteristic bicyclo[2.2.2]diazaoctane core. The first step of malbrancheamide biosynthesis involves coupling of L-proline and L-tryptophan by malG, a bimodular NRPS, to produce L-Pro-L-Trp aldehyde through reductive offloading. This compound undergoes spontaneous cyclization and dehydration to give a dienamine which is reverse prenylated at C-2 by malE. The other prenyltransferase present in the cluster, malB, displays modest activity, suggesting that may be a redundant gene in the pathway. Subsequently, a [4+2] Diels-Alder cyclo-addition catalyzed by the bifunctional enzyme malC forms the characteristic bicyclo[2.2.2]diazaoctane ring of premalbrancheamid. Finally, the flavin-dependent halogenase malA catalyzes the iterative dichlorination of the indole ring of premalbrancheamide to yield C-9 monochlorinated malbrancheamide B, C-8 monochlorinated isomalbrancheamide B, and dichlorinated malbrancheamide. MalA is also able to brominate premalbrancheamide at C-9 to yield malbrancheamide C, and, to a lesser extend, at C-8 to yield isomalbrancheamide C. Finally, malA can brominate C-9 monochlorinated malbrancheamide B at C-8 to yield malbrancheamide D, or C-8 monochlorinated isomalbrancheamide B at C-9 to produce isomalbrancheamide D. The chain is Prenyltransferase malB from Malbranchea aurantiaca.